The sequence spans 101 residues: Large ribosomal subunit protein uL24c (101 aa).

Belongs to the universal ribosomal protein uL24 family. As to quaternary structure, part of the 50S ribosomal subunit.

The protein resides in the plastid. Its subcellular location is the chloroplast. Functionally, one of two assembly initiator proteins, it binds directly to the 5'-end of the 23S rRNA, where it nucleates assembly of the 50S subunit. The chain is Large ribosomal subunit protein uL24c (rpl24) from Guillardia theta (Cryptophyte).